The sequence spans 461 residues: Adenine DNA glycosylase (461 aa).

Glu69 serves as the catalytic Proton donor/acceptor. 4 residues coordinate [4Fe-4S] cluster: Cys226, Cys233, Cys236, and Cys242. Residues 296 to 437 (QREERALVVI…RAALEIKKRK (142 aa)) enclose the Nudix hydrolase domain. A Nudix box motif is present at residues 340–366 (FGQESWPKDMDAEFQKSIAQWISNDSR).

Belongs to the Nth/MutY family. In terms of assembly, monomer. [4Fe-4S] cluster is required as a cofactor.

The enzyme catalyses Hydrolyzes free adenine bases from 7,8-dihydro-8-oxoguanine:adenine mismatched double-stranded DNA, leaving an apurinic site.. Adenine glycosylase active on G-A mispairs. Has glycosylase and nicking activities and is active at A/G and A/GO sites. The chain is Adenine DNA glycosylase (myh1) from Schizosaccharomyces pombe (strain 972 / ATCC 24843) (Fission yeast).